The sequence spans 696 residues: Golgi integral membrane protein 4 (696 aa).

The N-myristoyl glycine moiety is linked to residue glycine 2. Residues 2 to 12 (GNGMCSRKQKR) are Cytoplasmic-facing. The helical; Signal-anchor for type II membrane protein transmembrane segment at 13–33 (IFQTLLLLTVVFGFLYGAMLY) threads the bilayer. Residues 34–696 (YELQTQLRKA…AEKSHRRAEM (663 aa)) are Lumenal-facing. The stretch at 35-244 (ELQTQLRKAE…KQLKDTLNRI (210 aa)) forms a coiled coil. Residues 38–107 (TQLRKAEAVA…ETLNKGRQDS (70 aa)) form a golgi targeting region. The tract at residues 80–175 (LEHKKAKEDF…QELSKLKETV (96 aa)) is endosome targeting. Disordered regions lie at residues 122–145 (KSQHEELKKQHSDLEEEHRKQGED), 244–391 (IPSL…HARA), and 427–696 (LREH…RAEM). Residues 123–145 (SQHEELKKQHSDLEEEHRKQGED) show a composition bias toward basic and acidic residues. Residues 176–248 (YNLREENRQL…DTLNRIPSLR (73 aa)) form a golgi targeting region. Residues 254–269 (EQQNVTQVAHSPQGYN) show a composition bias toward polar residues. An N-linked (GlcNAc...) asparagine glycan is attached at asparagine 257. Composition is skewed to basic and acidic residues over residues 271-281 (AREKPTREVQE), 298-313 (RAEDTKLYAPTHKEAE), 324-343 (EVERREPEEHQVEEEHRKAL), 355-364 (EHLEEEHDPS), and 370-380 (REWKEQHEQRE). Serine 364 bears the Phosphoserine mark. Residues 436 to 453 (QQRLQGHLLRQQEQQQQQ) show a composition bias toward low complexity. 2 stretches are compositionally biased toward basic and acidic residues: residues 464–476 (AELEEGRPQHQEQ) and 505–545 (AYER…RAAV). Serine 538 carries the post-translational modification Phosphoserine. Residues 604-626 (QQEDNVDEQYQEEAEEEVQEDLT) show a composition bias toward acidic residues. Tyrosine 613 carries the post-translational modification Phosphotyrosine. Position 626 is a phosphothreonine (threonine 626). 2 stretches are compositionally biased toward basic and acidic residues: residues 627–638 (EEKKRELEHNAE) and 661–672 (RDDNRPKGREEH). Tyrosine 673 carries the phosphotyrosine modification. The segment covering 673–683 (YEEEEEEEEDG) has biased composition (acidic residues).

It belongs to the GOLIM4 family. In terms of processing, phosphorylated probably by c-AMP-dependent kinases in its lumenal part. Post-translationally, O-glycosylated; modified by sialic acid residues. N-glycosylated; N-glycans are probably of the complex type and modified by sialic acid residues.

It is found in the golgi apparatus. It localises to the golgi stack membrane. The protein resides in the endosome membrane. Its subcellular location is the membrane. In terms of biological role, plays a role in endosome to Golgi protein trafficking; mediates protein transport along the late endosome-bypass pathway from the early endosome to the Golgi. The chain is Golgi integral membrane protein 4 (GOLIM4) from Homo sapiens (Human).